The primary structure comprises 350 residues: Probable transposase-like protein At4g04430 (350 aa).

Disordered stretches follow at residues 1 to 57 and 307 to 328; these read MPSD…PSVN and QIGQ…QVAN. Low complexity predominate over residues 30–43; the sequence is SGVQGSGSRSGSTV.

Belongs to the transposase 24 family.

This Arabidopsis thaliana (Mouse-ear cress) protein is Probable transposase-like protein At4g04430.